Consider the following 218-residue polypeptide: Octanoyltransferase (218 aa).

Positions 31-206 (REAADEVWLV…QLVKHLDYAE (176 aa)) constitute a BPL/LPL catalytic domain. Residues 70-77 (RGGQVTYH), 137-139 (SLG), and 150-152 (GLA) each bind substrate. The active-site Acyl-thioester intermediate is the C168.

It belongs to the LipB family.

It is found in the cytoplasm. The catalysed reaction is octanoyl-[ACP] + L-lysyl-[protein] = N(6)-octanoyl-L-lysyl-[protein] + holo-[ACP] + H(+). It participates in protein modification; protein lipoylation via endogenous pathway; protein N(6)-(lipoyl)lysine from octanoyl-[acyl-carrier-protein]: step 1/2. Catalyzes the transfer of endogenously produced octanoic acid from octanoyl-acyl-carrier-protein onto the lipoyl domains of lipoate-dependent enzymes. Lipoyl-ACP can also act as a substrate although octanoyl-ACP is likely to be the physiological substrate. The polypeptide is Octanoyltransferase (Pseudomonas savastanoi pv. phaseolicola (strain 1448A / Race 6) (Pseudomonas syringae pv. phaseolicola (strain 1448A / Race 6))).